We begin with the raw amino-acid sequence, 508 residues long: Kinesin light chain 3 (508 aa).

Residues 1-20 (MSVQVAAPGSTGLGPERLNP) form a disordered region. Residues 88 to 150 (LLALSAHVSV…EEEKSHLQFL (63 aa)) adopt a coiled-coil conformation. Residues 154–197 (RQYDPPEESQRPESPPRRDSLASLFPSEEEEKKGPEAAGAAAAQ) are disordered. Residues 161-173 (ESQRPESPPRRDS) are compositionally biased toward basic and acidic residues. Ser-173 bears the Phosphoserine mark. 5 TPR repeats span residues 207–240 (LRTLHNLVIQYAGQGRYEVAVPLCRQALEDLERS), 249–282 (ATMLNILALVYRDQNKYKEATELLHDALQIREQT), 291–324 (AATLNNLAVLYGKRGRYREAEPLCQRALEIREKV), 333–366 (AKQLNNLALLCQNQGKFQDVERHYARALSIYEAL), and 375–408 (AKTKNNLASAYLKQNKYQQAEELYKEILSQEALP). Positions 409 to 441 (APLGAPQGGTAGDTQQQVLRRSSSFSKLRESIR) are disordered. Over residues 420 to 434 (GDTQQQVLRRSSSFS) the composition is skewed to polar residues. Phosphoserine is present on Ser-467. The interval 486–508 (LSTRHLSEAPRTLSISTQDLSPR) is disordered. Over residues 498 to 508 (LSISTQDLSPR) the composition is skewed to polar residues. Position 502 is a phosphothreonine (Thr-502). Residue Ser-506 is modified to Phosphoserine.

It belongs to the kinesin light chain family. As to quaternary structure, oligomer composed of two heavy chains and two light chains. Associates with microtubulin in an ATP-dependent manner. Interacts with KIF5C. Interacts with ODF1. Interacts with LRGUK. Interacts with VDAC2. Expressed in postmeiotic male germ cells (at protein level). Expressed in the testes (at protein level). Expressed in spleen, intestine, brain and ovary.

It localises to the cytoplasm. The protein resides in the cytoskeleton. The protein localises to the mitochondrion. In terms of biological role, kinesin is a microtubule-associated force-producing protein that may play a role in organelle transport. Plays a role during spermiogenesis in the development of the sperm tail midpiece and in the normal function of spermatozoa. May play a role in the formation of the mitochondrial sheath formation in the developing spermatid midpiece. This Mus musculus (Mouse) protein is Kinesin light chain 3 (Klc3).